A 471-amino-acid chain; its full sequence is P2X purinoceptor 2 (471 aa).

Residues 1 to 42 (MAAAQPKYPAGATARRLARGCWSALWDYETPKVIVVRNRRLG) lie on the Cytoplasmic side of the membrane. Disulfide bonds link Cys-21-Cys-439, Cys-125-Cys-176, Cys-136-Cys-159, Cys-142-Cys-170, Cys-226-Cys-236, and Cys-270-Cys-279. Residues 43-63 (VLYRAVQLLILLYFVWYVFIV) form a helical membrane-spanning segment. Over 64–337 (QKSYQESETG…IVHGQAGKFS (274 aa)) the chain is Extracellular. Residues Lys-81 and Lys-83 each coordinate ATP. Residue Asn-133 is glycosylated (N-linked (GlcNAc...) asparagine). N-linked (GlcNAc...) asparagine glycosylation is present at Asn-194. Residue Thr-196 coordinates ATP. Positions 296, 300, and 302 each coordinate ATP. Asn-310 is a glycosylation site (N-linked (GlcNAc...) asparagine). Lys-319 contributes to the ATP binding site. Positions 320–333 (AYGIRIDVIVHGQA) are pore-forming motif. The helical transmembrane segment at 338–358 (LIPTIINLATALTSVGVGSFL) threads the bilayer. The Cytoplasmic portion of the chain corresponds to 359–471 (CDWILLTFMN…PTDPKGLAQL (113 aa)). The interval 400-471 (GQAPPEPGHR…PTDPKGLAQL (72 aa)) is disordered.

This sequence belongs to the P2X receptor family. In terms of assembly, homotrimer and heterotrimer; functional P2XRs are organized as homomeric and heteromeric trimers. Homotrimer. Forms heterotrimer with P2RX1. Forms heterotrimer with P2RX6. Forms heterotrimer with P2RX3. Expressed in both the central and peripheral nervous system, as well as in the pituitary gland.

The protein localises to the cell membrane. It carries out the reaction Ca(2+)(in) = Ca(2+)(out). The enzyme catalyses K(+)(in) = K(+)(out). It catalyses the reaction Na(+)(in) = Na(+)(out). With respect to regulation, fast activation by external ATP. Exhibits slow desensitization during prolonged ATP activation. Not sensitive to the ATP agonist:alpha/beta-methylene-ATP. Functionally, ATP-gated nonselective transmembrane cation channel permeable to potassium, sodium and calcium. Activation by extracellular ATP induces a variety of cellular responses, such as excitatory postsynaptic responses in sensory neurons, neuromuscular junctions (NMJ) formation, hearing, perception of taste and peristalsis. In the inner ear, regulates sound transduction and auditory neurotransmission, outer hair cell electromotility, inner ear gap junctions, and K(+) recycling. Mediates synaptic transmission between neurons and from neurons to smooth muscle. This is P2X purinoceptor 2 from Homo sapiens (Human).